We begin with the raw amino-acid sequence, 117 residues long: Large ribosomal subunit protein uL18 (117 aa).

The protein belongs to the universal ribosomal protein uL18 family. In terms of assembly, part of the 50S ribosomal subunit; part of the 5S rRNA/L5/L18/L25 subcomplex. Contacts the 5S and 23S rRNAs.

Functionally, this is one of the proteins that bind and probably mediate the attachment of the 5S RNA into the large ribosomal subunit, where it forms part of the central protuberance. The chain is Large ribosomal subunit protein uL18 from Aliivibrio fischeri (strain ATCC 700601 / ES114) (Vibrio fischeri).